A 23-amino-acid chain; its full sequence is Maculatin-1.2 (23 aa).

The residue at position 23 (Ala-23) is an Alanine amide.

As to expression, expressed by the skin dorsal glands.

The protein resides in the secreted. Shows antibacterial activity against S.aureus and S.uberis. The chain is Maculatin-1.2 from Ranoidea genimaculata (Brown-spotted tree frog).